The sequence spans 77 residues: Large ribosomal subunit protein uL24 (77 aa).

It belongs to the universal ribosomal protein uL24 family. In terms of assembly, part of the 50S ribosomal subunit.

Functionally, one of two assembly initiator proteins, it binds directly to the 5'-end of the 23S rRNA, where it nucleates assembly of the 50S subunit. Its function is as follows. One of the proteins that surrounds the polypeptide exit tunnel on the outside of the subunit. This chain is Large ribosomal subunit protein uL24, found in Campylobacter fetus subsp. fetus (strain 82-40).